Reading from the N-terminus, the 299-residue chain is Circadian clock oscillator protein KaiA (299 aa).

The interval 1-135 is psR domain, binds oxidized quinones; it reads MQSPLSLCLF…LHLGPICTLP (135 aa). The KaiA N-terminal domain occupies 1-169; sequence MQSPLSLCLF…RLADKLKERL (169 aa). The flexible linker stretch occupies residues 170 to 178; sequence GYLGVYYKR. The KaiA C-terminal domain maps to 179–287; the sequence is KPSHFYRNFS…GEMYRRSIPR (109 aa).

This sequence belongs to the KaiA family. As to quaternary structure, homodimer. The KaiABC1 complex composition changes during the circadian cycle to control KaiC1 phosphorylation. Complexes KaiC1(6), KaiA(2-4):KaiC1(6), KaiB(6):KaiC1(6) and KaiC1(6):KaiB(6):KaiA(12) are among the most important forms, many form cooperatively. KaiA and CikA bind to the same region of the KaiB(fs) form and therefore compete. Interacts with KaiC1 but not KaiC2 or KaiC3. Interacts with itself, not seen to interact with other Kai proteins.

In terms of biological role, key component of the KaiABC oscillator complex, which constitutes the main circadian regulator in cyanobacteria. Complex composition changes during the circadian cycle to control KaiC phosphorylation. KaiA stimulates KaiC autophosphorylation, while KaiB sequesters KaiA, leading to KaiC autodephosphorylation. KaiA binding to the KaiC CII domain during the subjective day yields KaiA(2-4):KaiC(6) complexes which stimulate KaiC autophosphorylation. Phospho-Ser-431 KaiC accumulation triggers binding of KaiB during the subjective night to form the KaiB(6):KaiC(6) complex, leading to changes in the output regulators CikA and SasA. KaiB(6):KaiC(6) formation exposes a site for KaiA binding on KaiB that sequesters KaiA from KaiC's CII domain, making the KaiC(6):KaiB(6):KaiA(12) complex resulting in KaiC autodephosphorylation. Complete dephosphorylation of KaiC leads to dissociation of KaiA(2):KaiB(1), completing 1 cycle of the Kai oscillator. Component of the oscillator and circadian clock in this organism, enhances fitness in a rhythmic environment. Stimulates KaiC1 to autophosphorylate, has no effect on the kinase activity of KaiC2 or KaiC3. Its function is as follows. Binds oxidized quinones via the N-terminal PsR domain, allowing it to sense redox changes and possibly mediate clock input. This Synechocystis sp. (strain ATCC 27184 / PCC 6803 / Kazusa) protein is Circadian clock oscillator protein KaiA.